The sequence spans 133 residues: Small ribosomal subunit protein uS8 (133 aa).

This sequence belongs to the universal ribosomal protein uS8 family. As to quaternary structure, part of the 30S ribosomal subunit.

One of the primary rRNA binding proteins, it binds directly to 16S rRNA central domain where it helps coordinate assembly of the platform of the 30S subunit. In Staphylothermus marinus (strain ATCC 43588 / DSM 3639 / JCM 9404 / F1), this protein is Small ribosomal subunit protein uS8.